The chain runs to 413 residues: Aspartate aminotransferase, cytoplasmic (413 aa).

Residues Gly-39 and Trp-141 each coordinate L-aspartate. Ser-149 carries the post-translational modification Phosphoserine. Residue Asn-195 coordinates L-aspartate. An N6-(pyridoxal phosphate)lysine modification is found at Lys-259. Residue Arg-387 participates in L-aspartate binding.

Belongs to the class-I pyridoxal-phosphate-dependent aminotransferase family. In terms of assembly, homodimer. Pyridoxal 5'-phosphate is required as a cofactor.

The protein resides in the cytoplasm. It catalyses the reaction L-aspartate + 2-oxoglutarate = oxaloacetate + L-glutamate. It carries out the reaction L-cysteine + 2-oxoglutarate = 2-oxo-3-sulfanylpropanoate + L-glutamate. The catalysed reaction is (2S)-2-aminobutanoate + 2-oxoglutarate = 2-oxobutanoate + L-glutamate. The enzyme catalyses 3-sulfino-L-alanine + 2-oxoglutarate = 3-sulfinopyruvate + L-glutamate. Biosynthesis of L-glutamate from L-aspartate or L-cysteine. Important regulator of levels of glutamate, the major excitatory neurotransmitter of the vertebrate central nervous system. Acts as a scavenger of glutamate in brain neuroprotection. The aspartate aminotransferase activity is involved in hepatic glucose synthesis during development and in adipocyte glyceroneogenesis. Using L-cysteine as substrate, regulates levels of mercaptopyruvate, an important source of hydrogen sulfide. Mercaptopyruvate is converted into H(2)S via the action of 3-mercaptopyruvate sulfurtransferase (3MST). Hydrogen sulfide is an important synaptic modulator and neuroprotectant in the brain. In addition, catalyzes (2S)-2-aminobutanoate, a by-product in the cysteine biosynthesis pathway. The chain is Aspartate aminotransferase, cytoplasmic from Homo sapiens (Human).